Reading from the N-terminus, the 545-residue chain is Glucose-6-phosphate isomerase (545 aa).

E351 (proton donor) is an active-site residue. Residues H382 and K510 contribute to the active site.

This sequence belongs to the GPI family.

It localises to the cytoplasm. It catalyses the reaction alpha-D-glucose 6-phosphate = beta-D-fructose 6-phosphate. The protein operates within carbohydrate biosynthesis; gluconeogenesis. Its pathway is carbohydrate degradation; glycolysis; D-glyceraldehyde 3-phosphate and glycerone phosphate from D-glucose: step 2/4. Catalyzes the reversible isomerization of glucose-6-phosphate to fructose-6-phosphate. In Shewanella putrefaciens (strain CN-32 / ATCC BAA-453), this protein is Glucose-6-phosphate isomerase.